Consider the following 276-residue polypeptide: Bis(5'-nucleosyl)-tetraphosphatase, symmetrical (276 aa).

The protein belongs to the Ap4A hydrolase family.

It carries out the reaction P(1),P(4)-bis(5'-adenosyl) tetraphosphate + H2O = 2 ADP + 2 H(+). Functionally, hydrolyzes diadenosine 5',5'''-P1,P4-tetraphosphate to yield ADP. The polypeptide is Bis(5'-nucleosyl)-tetraphosphatase, symmetrical (Legionella pneumophila (strain Lens)).